A 318-amino-acid chain; its full sequence is Ribosomal RNA small subunit methyltransferase A (318 aa).

The S-adenosyl-L-methionine site is built by Asn-40, Val-42, Gly-67, Glu-88, Asp-118, and Asn-137. Residues 295–305 (SADRGGTDREG) are compositionally biased toward basic and acidic residues. The tract at residues 295 to 318 (SADRGGTDREGTSPPTAGQGAPAR) is disordered.

The protein belongs to the class I-like SAM-binding methyltransferase superfamily. rRNA adenine N(6)-methyltransferase family. RsmA subfamily.

Its subcellular location is the cytoplasm. The catalysed reaction is adenosine(1518)/adenosine(1519) in 16S rRNA + 4 S-adenosyl-L-methionine = N(6)-dimethyladenosine(1518)/N(6)-dimethyladenosine(1519) in 16S rRNA + 4 S-adenosyl-L-homocysteine + 4 H(+). In terms of biological role, specifically dimethylates two adjacent adenosines (A1518 and A1519) in the loop of a conserved hairpin near the 3'-end of 16S rRNA in the 30S particle. May play a critical role in biogenesis of 30S subunits. The polypeptide is Ribosomal RNA small subunit methyltransferase A (Mycolicibacterium paratuberculosis (strain ATCC BAA-968 / K-10) (Mycobacterium paratuberculosis)).